A 126-amino-acid polypeptide reads, in one-letter code: Large ribosomal subunit protein uL14m (126 aa).

Belongs to the universal ribosomal protein uL14 family. As to quaternary structure, component of the mitochondrial large ribosomal subunit (mt-LSU). Mature yeast 74S mitochondrial ribosomes consist of a small (37S) and a large (54S) subunit. The 37S small subunit contains a 15S ribosomal RNA (15S mt-rRNA) and at least 32 different proteins. The 54S large subunit contains a 21S rRNA (21S mt-rRNA) and at least 45 different proteins.

The protein resides in the mitochondrion. Its function is as follows. Component of the mitochondrial ribosome (mitoribosome), a dedicated translation machinery responsible for the synthesis of mitochondrial genome-encoded proteins, including at least some of the essential transmembrane subunits of the mitochondrial respiratory chain. The mitoribosomes are attached to the mitochondrial inner membrane and translation products are cotranslationally integrated into the membrane. In Schizosaccharomyces pombe (strain 972 / ATCC 24843) (Fission yeast), this protein is Large ribosomal subunit protein uL14m (mrpl38).